Here is a 325-residue protein sequence, read N- to C-terminus: Acetyl-coenzyme A carboxylase carboxyl transferase subunit alpha (325 aa).

A CoA carboxyltransferase C-terminal domain is found at 38–292; sequence KLEKRLHALE…DQVLEKSLKQ (255 aa).

The protein belongs to the AccA family. In terms of assembly, acetyl-CoA carboxylase is a heterohexamer composed of biotin carboxyl carrier protein (AccB), biotin carboxylase (AccC) and two subunits each of ACCase subunit alpha (AccA) and ACCase subunit beta (AccD).

It is found in the cytoplasm. The enzyme catalyses N(6)-carboxybiotinyl-L-lysyl-[protein] + acetyl-CoA = N(6)-biotinyl-L-lysyl-[protein] + malonyl-CoA. Its pathway is lipid metabolism; malonyl-CoA biosynthesis; malonyl-CoA from acetyl-CoA: step 1/1. Component of the acetyl coenzyme A carboxylase (ACC) complex. First, biotin carboxylase catalyzes the carboxylation of biotin on its carrier protein (BCCP) and then the CO(2) group is transferred by the carboxyltransferase to acetyl-CoA to form malonyl-CoA. The protein is Acetyl-coenzyme A carboxylase carboxyl transferase subunit alpha of Halalkalibacterium halodurans (strain ATCC BAA-125 / DSM 18197 / FERM 7344 / JCM 9153 / C-125) (Bacillus halodurans).